Here is a 226-residue protein sequence, read N- to C-terminus: ATP synthase subunit a (226 aa).

Helical transmembrane passes span 18–38 (LSLN…TYWL), 74–94 (FVSL…PYIF), 100–120 (LTLT…YGWI), 162–182 (LTAN…TGPM), and 187–207 (IILS…SAVA).

Belongs to the ATPase A chain family. As to quaternary structure, F-type ATPases have 2 components, CF(1) - the catalytic core - and CF(0) - the membrane proton channel. CF(1) has five subunits: alpha(3), beta(3), gamma(1), delta(1), epsilon(1). CF(0) has three main subunits: a, b and c.

It is found in the mitochondrion inner membrane. Functionally, mitochondrial membrane ATP synthase (F(1)F(0) ATP synthase or Complex V) produces ATP from ADP in the presence of a proton gradient across the membrane which is generated by electron transport complexes of the respiratory chain. F-type ATPases consist of two structural domains, F(1) - containing the extramembraneous catalytic core and F(0) - containing the membrane proton channel, linked together by a central stalk and a peripheral stalk. During catalysis, ATP synthesis in the catalytic domain of F(1) is coupled via a rotary mechanism of the central stalk subunits to proton translocation. Key component of the proton channel; it may play a direct role in the translocation of protons across the membrane. The protein is ATP synthase subunit a of Aedes aegypti (Yellowfever mosquito).